Consider the following 454-residue polypeptide: N-lysine methyltransferase setd6 (454 aa).

Positions 38–265 (PKVYISTEGT…AGQELFNTYG (228 aa)) constitute an SET domain.

This sequence belongs to the class V-like SAM-binding methyltransferase superfamily. Histone-lysine methyltransferase family. SETD6 subfamily.

It is found in the nucleus. Protein-lysine N-methyltransferase. The polypeptide is N-lysine methyltransferase setd6 (setd6) (Xenopus tropicalis (Western clawed frog)).